The chain runs to 289 residues: Protease HtpX homolog (289 aa).

Transmembrane regions (helical) follow at residues 5-27 (LWVR…GYLI) and 40-60 (ALFM…SWYN). His133 contributes to the Zn(2+) binding site. Glu134 is an active-site residue. Residue His137 coordinates Zn(2+). Transmembrane regions (helical) follow at residues 143 to 163 (TLIQ…VNFA) and 181 to 201 (IVAL…IQLA). Glu207 contacts Zn(2+).

This sequence belongs to the peptidase M48B family. Zn(2+) is required as a cofactor.

Its subcellular location is the cell membrane. In Pyrococcus furiosus (strain ATCC 43587 / DSM 3638 / JCM 8422 / Vc1), this protein is Protease HtpX homolog.